A 478-amino-acid chain; its full sequence is Glycogen synthase (478 aa).

Lysine 20 serves as a coordination point for ADP-alpha-D-glucose.

This sequence belongs to the glycosyltransferase 1 family. Bacterial/plant glycogen synthase subfamily.

It catalyses the reaction [(1-&gt;4)-alpha-D-glucosyl](n) + ADP-alpha-D-glucose = [(1-&gt;4)-alpha-D-glucosyl](n+1) + ADP + H(+). Its pathway is glycan biosynthesis; glycogen biosynthesis. Synthesizes alpha-1,4-glucan chains using ADP-glucose. In Cereibacter sphaeroides (strain ATCC 17025 / ATH 2.4.3) (Rhodobacter sphaeroides), this protein is Glycogen synthase.